Reading from the N-terminus, the 287-residue chain is Toxin zeta (287 aa).

40 to 47 (GQPGSGKT) contributes to the ATP binding site. A disordered region spans residues 250-287 (MVQNQHQETPEFKAIQQKMESLQPPTPPIPKTPKLPGI). Pro residues predominate over residues 273-287 (PPTPPIPKTPKLPGI).

The protein belongs to the zeta toxin family. As to quaternary structure, in the presence of the epsilon antitoxin, forms an inactive PezA(2)PezT(2) heterotetramer.

It catalyses the reaction UDP-N-acetyl-alpha-D-glucosamine + ATP = UDP-N-acetyl-alpha-D-glucosamine 3'-phosphate + ADP + H(+). In terms of biological role, toxic component of a type II toxin-antitoxin (TA) system. Phosphorylates UDP-N-acetyl-D-glucosamine (UNAG) on the 3'-hydroxyl group of the N-acetyl-D-glucosamine moiety, yielding UNAG-3P. UNAG-3P inhibits MurA, the first committed step in cell wall synthesis, which is then blocked. Phosphorylation is inhibited by cognate epsilon antitoxin. Part of a postsegregational killing (PSK) system involved in the killing of plasmid-free cells. The zeta toxin induces programmed cell death. The sequence is that of Toxin zeta from Streptococcus agalactiae.